We begin with the raw amino-acid sequence, 854 residues long: Envelope glycoprotein gp160 (854 aa).

Positions 1–20 (MGRLLIKILIIAIGISIGIG) are cleaved as a signal peptide. Residues 21–705 (NLYVTVFYGI…IILGLRFAWV (685 aa)) are Extracellular-facing. Residue Asn-35 is glycosylated (N-linked (GlcNAc...) asparagine; by host). Residues Cys-42 and Cys-55 are joined by a disulfide bond. Residues Asn-68, Asn-115, Asn-136, Asn-153, Asn-168, Asn-182, and Asn-199 are each glycosylated (N-linked (GlcNAc...) asparagine; by host). 5 disulfide bridges follow: Cys-99–Cys-207, Cys-106–Cys-198, Cys-111–Cys-154, Cys-220–Cys-250, and Cys-230–Cys-242. The interval 111-153 (CVELNGTATTKATTTATTTMTTPCQNCSTEQIEGEMAEEPASN) is V1. A V2 region spans residues 154-198 (CTFAIAGYQRDVKKNYSMTWYDQELVCNNKTGSEKGSKDCYMIHC). Residues Asn-244, Asn-255, Asn-265, Asn-271, Asn-283, Asn-295, Asn-305, Asn-355, Asn-400, Asn-409, Asn-458, Asn-472, and Asn-478 are each glycosylated (N-linked (GlcNAc...) asparagine; by host). Residues 300-332 (CRRPGNKTVLPVTIMAGLVFHSQKYNTRLKQAW) are V3. Cys-300 and Cys-333 are oxidised to a cystine. Intrachain disulfides connect Cys-382–Cys-457 and Cys-389–Cys-430. Residues 389-430 (CKMDWFINYLNNRTEDAEGTNRTCDKGKPGPGPCVQRTYVAC) form a V4 region. Residues 473-481 (KSGPINVTL) are V5. The segment at 523–543 (VPFVLGFLGFLGAAGTAMGAA) is fusion peptide. Residues 586-602 (LNARVTALEKYLEDQAR) form an immunosuppression region. Asn-630 and Asn-646 each carry an N-linked (GlcNAc...) asparagine; by host glycan. The stretch at 633 to 672 (WLEWERQINALEGNITQLLEEAQNQESKNLDLYQKLDDWS) forms a coiled coil. The tract at residues 667-688 (KLDDWSGFWSWFSLSTWLGYVK) is MPER; binding to GalCer. The chain crosses the membrane as a helical span at residues 706-726 (LWGCIRNIRQGYNPLPQIHIH). The YXXL motif; contains endocytosis signal motif lies at 717-720 (YNPL). Residues 727–854 (SSAERPDNGG…VRQGLEKVLG (128 aa)) lie on the Cytoplasmic side of the membrane.

In terms of assembly, the mature envelope protein (Env) consists of a homotrimer of non-covalently associated gp120-gp41 heterodimers. The resulting complex protrudes from the virus surface as a spike. Interacts with host CD4 and CCR5. Gp120 also interacts with the C-type lectins CD209/DC-SIGN and CLEC4M/DC-SIGNR (collectively referred to as DC-SIGN(R)). As to quaternary structure, the mature envelope protein (Env) consists of a homotrimer of non-covalently associated gp120-gp41 heterodimers. The resulting complex protrudes from the virus surface as a spike. Post-translationally, specific enzymatic cleavages in vivo yield mature proteins. Envelope glycoproteins are synthesized as an inactive precursor that is heavily N-glycosylated and processed likely by host cell furin in the Golgi to yield the mature SU and TM proteins. The cleavage site between SU and TM requires the minimal sequence [KR]-X-[KR]-R.

The protein localises to the virion membrane. The protein resides in the host cell membrane. Its subcellular location is the host endosome membrane. The surface protein gp120 (SU) attaches the virus to the host lymphoid cell by binding to the primary receptor CD4. This interaction induces a structural rearrangement creating a high affinity binding site for a chemokine coreceptor like CCR5. This peculiar 2 stage receptor-interaction strategy allows gp120 to maintain the highly conserved coreceptor-binding site in a cryptic conformation, protected from neutralizing antibodies. These changes are transmitted to the transmembrane protein gp41 and are thought to activate its fusogenic potential by unmasking its fusion peptide. Its function is as follows. Surface protein gp120 (SU) may target the virus to gut-associated lymphoid tissue (GALT) by binding host ITGA4/ITGB7 (alpha-4/beta-7 integrins), a complex that mediates T-cell migration to the GALT. Interaction between gp120 and ITGA4/ITGB7 would allow the virus to enter GALT early in the infection, infecting and killing most of GALT's resting CD4+ T-cells. This T-cell depletion is believed to be the major insult to the host immune system leading to AIDS. In terms of biological role, the surface protein gp120 is a ligand for CD209/DC-SIGN and CLEC4M/DC-SIGNR, which are respectively found on dendritic cells (DCs), and on endothelial cells of liver sinusoids and lymph node sinuses. These interactions allow capture of viral particles at mucosal surfaces by these cells and subsequent transmission to permissive cells. DCs are professional antigen presenting cells, critical for host immunity by inducing specific immune responses against a broad variety of pathogens. They act as sentinels in various tissues where they take up antigen, process it, and present it to T-cells following migration to lymphoid organs. SIV subverts the migration properties of dendritic cells to gain access to CD4+ T-cells in lymph nodes. Virus transmission to permissive T-cells occurs either in trans (without DCs infection, through viral capture and transmission), or in cis (following DCs productive infection, through the usual CD4-gp120 interaction), thereby inducing a robust infection. In trans infection, bound virions remain infectious over days and it is proposed that they are not degraded, but protected in non-lysosomal acidic organelles within the DCs close to the cell membrane thus contributing to the viral infectious potential during DCs' migration from the periphery to the lymphoid tissues. On arrival at lymphoid tissues, intact virions recycle back to DCs' cell surface allowing virus transmission to CD4+ T-cells. Virion capture also seems to lead to MHC-II-restricted viral antigen presentation, and probably to the activation of SIV-specific CD4+ cells. Functionally, the transmembrane protein gp41 (TM) acts as a class I viral fusion protein. Under the current model, the protein has at least 3 conformational states: pre-fusion native state, pre-hairpin intermediate state, and post-fusion hairpin state. During fusion of viral and target intracellular membranes, the coiled coil regions (heptad repeats) assume a trimer-of-hairpins structure, positioning the fusion peptide in close proximity to the C-terminal region of the ectodomain. The formation of this structure appears to drive apposition and subsequent fusion of viral and target cell membranes. Complete fusion occurs in host cell endosomes. The virus undergoes clathrin-dependent internalization long before endosomal fusion, thus minimizing the surface exposure of conserved viral epitopes during fusion and reducing the efficacy of inhibitors targeting these epitopes. Membranes fusion leads to delivery of the nucleocapsid into the cytoplasm. The envelope glycoprotein gp160 precursor down-modulates cell surface CD4 antigen by interacting with it in the endoplasmic reticulum and blocking its transport to the cell surface. Its function is as follows. The gp120-gp41 heterodimer allows rapid transcytosis of the virus through CD4 negative cells such as simple epithelial monolayers of the intestinal, rectal and endocervical epithelial barriers. Both gp120 and gp41 specifically recognize glycosphingolipids galactosyl-ceramide (GalCer) or 3' sulfo-galactosyl-ceramide (GalS) present in the lipid rafts structures of epithelial cells. Binding to these alternative receptors allows the rapid transcytosis of the virus through the epithelial cells. This transcytotic vesicle-mediated transport of virions from the apical side to the basolateral side of the epithelial cells does not involve infection of the cells themselves. In Cercopithecidae (Old World monkeys), this protein is Envelope glycoprotein gp160 (env).